We begin with the raw amino-acid sequence, 1978 residues long: Sodium channel protein type 8 subunit alpha (1978 aa).

Disordered stretches follow at residues 1–20 and 28–62; these read MAAR…FTPE and RIAE…LEAG. Over 1 to 132 the chain is Cytoplasmic; sequence MAARVLAPPG…RIAIKILIHS (132 aa). Residues 28–61 are compositionally biased toward basic and acidic residues; that stretch reads RIAESKLKKPPKADGSHREDDEDSKPKPNSDLEA. The stretch at 114–442 is one I repeat; the sequence is ILSPFNLIRR…KAMLEQLKKQ (329 aa). The chain crosses the membrane as a helical span at residues 133–151; that stretch reads VFSMIIMCTILTNCVFMTF. The Extracellular portion of the chain corresponds to 152–158; sequence SNPPEWS. A helical membrane pass occupies residues 159-179; sequence KNVEYTFTGIYTFESLVKIIA. Over 180–193 the chain is Cytoplasmic; that stretch reads RGFCIDGFTFLRDP. The chain crosses the membrane as a helical span at residues 194 to 211; sequence WNWLDFSVIMMAYVTEFV. At 212–217 the chain is on the extracellular side; that stretch reads DLGNVS. N-linked (GlcNAc...) asparagine glycosylation occurs at Asn215. A helical transmembrane segment spans residues 218-234; the sequence is ALRTFRVLRALKTISVI. Over 235-253 the chain is Cytoplasmic; the sequence is PGLKTIVGALIQSVKKLSD. Residues 254–273 form a helical membrane-spanning segment; the sequence is VMILTVFCLSVFALIGLQLF. At 274–355 the chain is on the extracellular side; sequence MGNLRNKCVV…PNYGYTSFDT (82 aa). An intrachain disulfide couples Cys281 to Cys333. 4 N-linked (GlcNAc...) asparagine glycosylation sites follow: Asn289, Asn295, Asn308, and Asn326. The pore-forming intramembrane region spans 356-380; sequence FSWAFLALFRLMTQDYWENLYQLTL. Residue Glu373 coordinates Na(+). Residues 381-387 lie on the Extracellular side of the membrane; that stretch reads RAAGKTY. A helical membrane pass occupies residues 388 to 408; it reads MIFFVLVIFVGSFYLVNLILA. Residues 409–751 lie on the Cytoplasmic side of the membrane; that stretch reads VVAMAYEEQN…EIVNLIVMDP (343 aa). 2 disordered regions span residues 446-530 and 576-597; these read AQAA…KAFR and DPGS…SEGR. A compositionally biased stretch (low complexity) spans 473–486; that stretch reads SPRSSSELSKLSSK. Over residues 489–500 the composition is skewed to basic residues; it reads KERRNRRKKRKQ. Composition is skewed to basic and acidic residues over residues 501-530 and 586-597; these read KELS…KAFR and DEHSTVEESEGR. Residues Ser518 and Ser520 each carry the phosphoserine modification. The stretch at 733–1005 is one II repeat; sequence CHPYWIKLKE…QISVIRIKKG (273 aa). A helical transmembrane segment spans residues 752 to 770; that stretch reads FVDLAITICIVLNTLFMAM. At 771 to 781 the chain is on the extracellular side; that stretch reads EHHPMTPQFEH. Residues 782–801 form a helical membrane-spanning segment; it reads VLAVGNLVFTGIFTAEMFLK. Residues 802 to 815 lie on the Cytoplasmic side of the membrane; the sequence is LIAMDPYYYFQEGW. A helical transmembrane segment spans residues 816–835; the sequence is NIFDGFIVSLSLMELGLADV. At 836 to 837 the chain is on the extracellular side; the sequence is EG. A helical transmembrane segment spans residues 838-855; the sequence is LSVLRSFRLLRVFKLAKS. Residues 856-871 are Cytoplasmic-facing; it reads WPTLNMLIKIIGNSVG. A helical transmembrane segment spans residues 872–890; that stretch reads ALGNLTLVLAIIVFIFAVV. Topologically, residues 891 to 919 are extracellular; that stretch reads GMQLFGKSYKECVCKISQECKLPRWHMND. Cys904 and Cys910 form a disulfide bridge. The segment at residues 920–940 is an intramembrane region (pore-forming); the sequence is FFHSFLIVFRVLCGEWIETMW. Na(+)-binding residues include Glu934 and Glu937. At 941–953 the chain is on the extracellular side; it reads DCMEVAGQAMCLI. Cys942 and Cys951 are joined by a disulfide. The chain crosses the membrane as a helical span at residues 954 to 974; the sequence is VFMMVMVIGNLVVLNLFLALL. The Cytoplasmic segment spans residues 975-1197; sequence LSSFSADNLA…TCFLIVEHNW (223 aa). Residues 1105-1146 form a disordered region; it reads NLNTEDVSSESDPEGSKDKLDDTSSSEGSTIDIKPEVEEVPV. The III repeat unit spans residues 1178 to 1493; sequence LGKSWWILRK…KKYYNAMKKL (316 aa). Residues 1198 to 1215 form a helical membrane-spanning segment; it reads FETFIIFMILLSSGALAF. Topologically, residues 1216 to 1228 are extracellular; the sequence is EDIYIEQRKTIRT. Residues 1229 to 1247 traverse the membrane as a helical segment; sequence ILEYADKVFTYIFILEMLL. At 1248–1261 the chain is on the cytoplasmic side; it reads KWTAYGFVKFFTNA. Residues 1262-1280 traverse the membrane as a helical segment; it reads WCWLDFLIVAVSLVSLIAN. Over 1281–1288 the chain is Extracellular; it reads ALGYSELG. A helical transmembrane segment spans residues 1289-1307; the sequence is AIKSLRTLRALRPLRALSR. Residues 1308-1324 lie on the Cytoplasmic side of the membrane; that stretch reads FEGMRVVVNALVGAIPS. A helical membrane pass occupies residues 1325–1344; that stretch reads IMNVLLVCLIFWLIFSIMGV. The Extracellular portion of the chain corresponds to 1345-1397; sequence NLFAGKYHYCFNETSEIRFEIDEVNNKTDCEKLMEGNNTEIRWKNVKINFDNV. Cys1354 and Cys1374 form a disulfide bridge. N-linked (GlcNAc...) asparagine glycosylation is found at Asn1356, Asn1370, and Asn1381. Positions 1398–1419 form an intramembrane region, pore-forming; it reads GAGYLALLQVATFKGWMDIMYA. Topologically, residues 1420-1436 are extracellular; that stretch reads AVDSRKPDEQPDYEGNI. Residues 1437 to 1458 form a helical membrane-spanning segment; the sequence is YMYIYFVIFIIFGSFFTLNLFI. Over 1459–1521 the chain is Cytoplasmic; that stretch reads GVIIDNFNQQ…IVFDFVTQQA (63 aa). A Phosphoserine; by PKC modification is found at Ser1495. The stretch at 1502 to 1799 is one IV repeat; it reads IPRPLNKIQG…WEKFDPDATQ (298 aa). A helical membrane pass occupies residues 1522–1539; sequence FDIVIMMLICLNMVTMMV. Topologically, residues 1540 to 1550 are extracellular; it reads ETDTQSKQMEN. The helical transmembrane segment at 1551–1569 threads the bilayer; the sequence is ILYWINLVFVIFFTCECVL. Over 1570 to 1581 the chain is Cytoplasmic; sequence KMFALRHYYFTI. Residues 1582–1599 form a helical membrane-spanning segment; the sequence is GWNIFDFVVVILSIVGMF. The Extracellular portion of the chain corresponds to 1600–1612; the sequence is LADIIEKYFVSPT. The helical transmembrane segment at 1613–1629 threads the bilayer; it reads LFRVIRLARIGRILRLI. Topologically, residues 1630-1648 are cytoplasmic; sequence KGAKGIRTLLFALMMSLPA. A helical transmembrane segment spans residues 1649–1666; it reads LFNIGLLLFLVMFIFSIF. Over 1667 to 1688 the chain is Extracellular; it reads GMSNFAYVKHEAGIDDMFNFET. The pore-forming intramembrane region spans 1689-1711; that stretch reads FGNSMICLFQITTSAGWDGLLLP. Residues 1712 to 1740 lie on the Extracellular side of the membrane; the sequence is ILNRPPDCSLDKEHPGSGFKGDCGNPSVG. A disulfide bridge connects residues Cys1719 and Cys1734. The chain crosses the membrane as a helical span at residues 1741–1763; sequence IFFFVSYIIISFLIVVNMYIAII. The Cytoplasmic portion of the chain corresponds to 1764 to 1978; that stretch reads LENFSVATEE…RQKEVRESKC (215 aa). One can recognise an IQ domain in the interval 1893-1922; it reads EEVSAVVLQRAYRGHLARRGFICRKITSNK. The disordered stretch occupies residues 1924–1978; the sequence is ENGGTHREKKESTPSTASLPSYDSVTKPDKEKQQRAEEGRRERAKRQKEVRESKC. The segment covering 1936-1947 has biased composition (polar residues); the sequence is TPSTASLPSYDS. A compositionally biased stretch (basic and acidic residues) spans 1949-1978; it reads TKPDKEKQQRAEEGRRERAKRQKEVRESKC.

This sequence belongs to the sodium channel (TC 1.A.1.10) family. Nav1.6/SCN8A subfamily. In terms of assembly, the voltage-sensitive sodium channel consists of an ion-conducting pore-forming alpha subunit regulated by one or more beta-1 (SCN1B), beta-2 (SCN2B), beta-3 (SCN3B) and/or beta-4 (SCN4B) subunits. Beta-1 (SCN1B) and beta-3 (SCN3B) are non-covalently associated with alpha, while beta-2 (SCN2B) and beta-4 (SCN4B) are covalently linked by disulfide bonds. Interacts with FGF13. Interacts with NEDD4 and NEDD4L. Interacts with FGF14, GBG3, GBB2 and SCN1B. Interacts with TMEM233. Interacts with the conotoxin GVIIJ. Interacts with the scorpion toxin BMK M1. Interacts with CALM1; the interaction modulates the inactivation rate of SCN8A. May be ubiquitinated by NEDD4L; which would promote its endocytosis. Post-translationally, phosphorylation at Ser-1495 by PKC in a highly conserved cytoplasmic loop slows inactivation of the sodium channel and reduces peak sodium currents. As to expression, expressed in the hippocampus (at protein level). Expressed in brain, cerebellum and spinal cord. Expressed in non-neuronal tissues, such as monocytes/macrophages.

It localises to the cell membrane. It is found in the cell projection. The protein localises to the axon. The protein resides in the cytoplasmic vesicle. Its subcellular location is the podosome. The enzyme catalyses Na(+)(in) = Na(+)(out). Its function is as follows. Pore-forming subunit of a voltage-gated sodium channel complex assuming opened or closed conformations in response to the voltage difference across membranes and through which sodium ions selectively pass along their electrochemical gradient. Contributes to neuronal excitability by regulating action potential threshold and propagation. In terms of biological role, more specifically expressed in non-neuronal cells, could play a role in sodium release from intracellular compartments and participate in the control of podosomes formation and macrophages adhesion and movement. This Mus musculus (Mouse) protein is Sodium channel protein type 8 subunit alpha.